The sequence spans 141 residues: Nucleoside diphosphate kinase (141 aa).

ATP is bound by residues lysine 11, phenylalanine 59, arginine 87, threonine 93, arginine 104, and asparagine 114. The Pros-phosphohistidine intermediate role is filled by histidine 117.

It belongs to the NDK family. As to quaternary structure, homotetramer. The cofactor is Mg(2+).

The protein localises to the cytoplasm. It carries out the reaction a 2'-deoxyribonucleoside 5'-diphosphate + ATP = a 2'-deoxyribonucleoside 5'-triphosphate + ADP. The enzyme catalyses a ribonucleoside 5'-diphosphate + ATP = a ribonucleoside 5'-triphosphate + ADP. In terms of biological role, major role in the synthesis of nucleoside triphosphates other than ATP. The ATP gamma phosphate is transferred to the NDP beta phosphate via a ping-pong mechanism, using a phosphorylated active-site intermediate. This is Nucleoside diphosphate kinase from Pseudomonas syringae pv. tomato (strain ATCC BAA-871 / DC3000).